The following is a 687-amino-acid chain: E3 ubiquitin-protein ligase RNF19B (687 aa).

Residues 1-294 (MRLRNDCLVR…VCGCEFCWLC (294 aa)) are required for ubiquitin ligase activity and for protection against staurosporin-induced cell death. A disordered region spans residues 53–88 (RTRAAPEPSVPSPPPSPPPPPPPPVSVPPPPSSPGG). A compositionally biased stretch (pro residues) spans 60–85 (PSVPSPPPSPPPPPPPPVSVPPPPSS). The interval 91–313 (SLIECPLCLV…LSPSGCTFWG (223 aa)) is TRIAD supradomain. The Zn(2+) site is built by cysteine 95, cysteine 98, cysteine 118, cysteine 121, cysteine 182, cysteine 187, cysteine 204, cysteine 209, cysteine 214, cysteine 217, histidine 222, cysteine 227, cysteine 263, and cysteine 266. The RING-type 1 zinc finger occupies 95–144 (CPLCLVRQPPEEIPELLSCRHRSCLRCLRQYLRIEICESRVNLRCPECAE). Residues 161–227 (TRKYEEFLLR…KHVWHPNQTC (67 aa)) form an IBR-type zinc finger. The RING-type 2; atypical zinc-finger motif lies at 263–294 (CPRCSAYIIKMNDGSCNHMTCSVCGCEFCWLC). Residue cysteine 278 is part of the active site. The Zn(2+) site is built by cysteine 283, cysteine 286, cysteine 291, cysteine 294, histidine 302, and cysteine 309. 2 consecutive transmembrane segments (helical) span residues 330 to 350 (LIGA…AMVI) and 391 to 411 (VVAA…VYGV). Residues 618 to 662 (SIRSDLESSDAQSDDVPDLASEEYDSPHLFPPSPSNALQESPPHR) form a disordered region. A compositionally biased stretch (acidic residues) spans 629 to 641 (QSDDVPDLASEEY).

This sequence belongs to the RBR family. RNF19 subfamily. As to quaternary structure, interacts with UBE2L3, UBE2L6 and UCKL1.

The protein resides in the cytoplasmic granule membrane. Its subcellular location is the endoplasmic reticulum membrane. It catalyses the reaction [E2 ubiquitin-conjugating enzyme]-S-ubiquitinyl-L-cysteine + [acceptor protein]-L-lysine = [E2 ubiquitin-conjugating enzyme]-L-cysteine + [acceptor protein]-N(6)-ubiquitinyl-L-lysine.. The protein operates within protein modification; protein ubiquitination. Its function is as follows. E3 ubiquitin-protein ligase which accepts ubiquitin from E2 ubiquitin-conjugating enzymes UBE2L3 and UBE2L6 in the form of a thioester and then directly transfers the ubiquitin to targeted substrates, such as UCKL1. Involved in the cytolytic activity of natural killer cells and cytotoxic T-cells. Protects against staurosporin-induced cell death. The sequence is that of E3 ubiquitin-protein ligase RNF19B (rnf19b) from Xenopus laevis (African clawed frog).